Here is a 196-residue protein sequence, read N- to C-terminus: Large ribosomal subunit protein bL25 (196 aa).

It belongs to the bacterial ribosomal protein bL25 family. CTC subfamily. In terms of assembly, part of the 50S ribosomal subunit; part of the 5S rRNA/L5/L18/L25 subcomplex. Contacts the 5S rRNA. Binds to the 5S rRNA independently of L5 and L18.

Its function is as follows. This is one of the proteins that binds to the 5S RNA in the ribosome where it forms part of the central protuberance. The protein is Large ribosomal subunit protein bL25 of Amoebophilus asiaticus (strain 5a2).